A 247-amino-acid polypeptide reads, in one-letter code: MSKEPDRIFAQPMAQVPDFAFNEDVVRVFPDMIKRSVPGYPTIVENLGVLAAQFAQPNSVLYDLGASLGAVTQALRRHVRTDGCRVIAVDNSAAMVERCREYLNGQDSMFQELLPVEVIEGDILALDFKPASVVALNFTLQFIAPDQRTALLSRIRQSLLPGGALILSEKLRFNDAEEHALLTDLHVAFKRANGYSELEIAQKRSAIENVMKPDSLEEHRERLLAAGFSKVVPWFQCLNFASLIALP.

S-adenosyl-L-methionine contacts are provided by residues Y40, 65-67 (GAS), 90-91 (DN), 122-123 (DI), N137, and R204.

This sequence belongs to the class I-like SAM-binding methyltransferase superfamily. Cx-SAM synthase family. As to quaternary structure, homodimer.

It carries out the reaction prephenate + S-adenosyl-L-methionine = carboxy-S-adenosyl-L-methionine + 3-phenylpyruvate + H2O. Its function is as follows. Catalyzes the conversion of S-adenosyl-L-methionine (SAM) to carboxy-S-adenosyl-L-methionine (Cx-SAM). This is Carboxy-S-adenosyl-L-methionine synthase from Pseudomonas fluorescens (strain Pf0-1).